Here is a 653-residue protein sequence, read N- to C-terminus: Macrolide export ATP-binding/permease protein MacB (653 aa).

The region spanning 6-244 is the ABC transporter domain; it reads LALSHICREF…AAASLPADKP (239 aa). Position 42–49 (42–49) interacts with ATP; the sequence is GSSGSGKS. 4 consecutive transmembrane segments (helical) span residues 277–297, 526–546, 587–607, and 617–637; these read FLTM…VALG, LAFL…IGVM, LGGI…NLLL, and FSIG…GYFP.

This sequence belongs to the ABC transporter superfamily. Macrolide exporter (TC 3.A.1.122) family. As to quaternary structure, homodimer.

It is found in the cell inner membrane. Non-canonical ABC transporter that contains transmembrane domains (TMD), which form a pore in the inner membrane, and an ATP-binding domain (NBD), which is responsible for energy generation. Confers resistance against macrolides. The chain is Macrolide export ATP-binding/permease protein MacB from Bradyrhizobium diazoefficiens (strain JCM 10833 / BCRC 13528 / IAM 13628 / NBRC 14792 / USDA 110).